A 452-amino-acid polypeptide reads, in one-letter code: Fructose-2,6-bisphosphatase (452 aa).

Residues 1-223 are 6-phosphofructo-2-kinase; it reads MGYSTISNDN…VFYVMNIRPK (223 aa). ATP is bound at residue 20–28; the sequence is GLPARGKSF. Residues Arg53 and Arg78 each contribute to the beta-D-fructose 6-phosphate site. Asp104 is an active-site residue. Thr106 and Arg112 together coordinate beta-D-fructose 6-phosphate. 143 to 148 serves as a coordination point for ATP; the sequence is NAKDIG. Residues Arg169 and Tyr173 each coordinate beta-D-fructose 6-phosphate. Residues 224 to 452 are fructose-2,6-bisphosphatase; the sequence is PKYIWLSRHG…LNDSPLEDKF (229 aa). Residue Arg231 participates in beta-D-fructose 2,6-bisphosphate binding. Residue His232 is the Tele-phosphohistidine intermediate of the active site. Residues Asn238 and Gly244 each coordinate beta-D-fructose 2,6-bisphosphate. Glu302 (proton donor/acceptor) is an active-site residue. Tyr313, Arg327, Lys331, Tyr342, Gln368, and Arg372 together coordinate beta-D-fructose 2,6-bisphosphate. 324–327 provides a ligand contact to ATP; sequence FKAR. ATP is bound by residues 368 to 372 and Tyr404; that span reads QAVLR. Residues Ser435 and Ser446 each carry the phosphoserine modification.

It in the C-terminal section; belongs to the phosphoglycerate mutase family.

It carries out the reaction beta-D-fructose 2,6-bisphosphate + H2O = beta-D-fructose 6-phosphate + phosphate. Its activity is regulated as follows. Inhibited by fructose 6-P, activated by glycerol 3-P. Its function is as follows. Monofunctional, high-specificity fructose-2,6-bisphosphatase, which releases phosphate from the 2-position of fructose 2,6-bisphosphate. Has no detectable 6-phosphofructo-2-kinase activity. The sequence is that of Fructose-2,6-bisphosphatase from Saccharomyces cerevisiae (strain ATCC 204508 / S288c) (Baker's yeast).